The following is a 181-amino-acid chain: Probable pyruvoyl-dependent arginine decarboxylase (181 aa).

A Pyruvic acid (Ser) modification is found at Ser43.

It belongs to the PdaD family. Pyruvate serves as cofactor.

The enzyme catalyses L-arginine + H(+) = agmatine + CO2. This is Probable pyruvoyl-dependent arginine decarboxylase from Chlorobium luteolum (strain DSM 273 / BCRC 81028 / 2530) (Pelodictyon luteolum).